Reading from the N-terminus, the 151-residue chain is UPAR/Ly6 domain-containing protein crok (151 aa).

The N-terminal stretch at 1–23 (MKTLEKYILFAIVLCCLLQLGQA) is a signal peptide. Over 24–128 (IKCWDCRSDN…KDGCNSAGIH (105 aa)) the chain is Lumenal. Intrachain disulfides connect C26/C68, C29/C37, C51/C85, C100/C114, and C116/C122. A glycan (N-linked (GlcNAc...) asparagine) is linked at N43. The GPI-anchor amidated serine moiety is linked to residue S124. The propeptide at 125-151 (AGIHRLGLMGVLTGTLLSVIVAHLLRQ) is removed in mature form. The helical transmembrane segment at 129–149 (RLGLMGVLTGTLLSVIVAHLL) threads the bilayer. Residues 150-151 (RQ) are Cytoplasmic-facing.

This sequence belongs to the quiver family.

It is found in the vesicle. It localises to the membrane. The protein resides in the endomembrane system. In terms of biological role, required for septate junction assembly, possibly by organizing the preassembly and transport of septate junction proteins including dlg1/disks large 1 and Nrx-IV/Neurexin-IV. Involved in paracellular barrier functions of trachea, hindgut and salivary gland mediated by epithelial cell septate junctions. The polypeptide is UPAR/Ly6 domain-containing protein crok (Drosophila melanogaster (Fruit fly)).